The following is a 279-amino-acid chain: Ribosomal RNA small subunit methyltransferase A (279 aa).

The S-adenosyl-L-methionine site is built by Asn-27, Leu-29, Gly-54, Glu-76, Asp-102, and Asn-127.

Belongs to the class I-like SAM-binding methyltransferase superfamily. rRNA adenine N(6)-methyltransferase family. RsmA subfamily.

The protein resides in the cytoplasm. The catalysed reaction is adenosine(1518)/adenosine(1519) in 16S rRNA + 4 S-adenosyl-L-methionine = N(6)-dimethyladenosine(1518)/N(6)-dimethyladenosine(1519) in 16S rRNA + 4 S-adenosyl-L-homocysteine + 4 H(+). Specifically dimethylates two adjacent adenosines (A1518 and A1519) in the loop of a conserved hairpin near the 3'-end of 16S rRNA in the 30S particle. May play a critical role in biogenesis of 30S subunits. The polypeptide is Ribosomal RNA small subunit methyltransferase A (Mesorhizobium japonicum (strain LMG 29417 / CECT 9101 / MAFF 303099) (Mesorhizobium loti (strain MAFF 303099))).